The chain runs to 496 residues: Solute carrier family 2, facilitated glucose transporter member 11 (496 aa).

Residues 1–11 (MRALRRLIQGR) are Cytoplasmic-facing. Residues 12–32 (ILLLTICAAGIGGTFQFGYNL) form a helical membrane-spanning segment. Residues 33–61 (SIINAPTLHIQEFTNETWQARTGEPLPDH) are Extracellular-facing. Asn-47 is a glycosylation site (N-linked (GlcNAc...) asparagine). A helical transmembrane segment spans residues 62-82 (LVLLMWSLIVSLYPLGGLFGA). At 83 to 97 (LLAGPLAITLGRKKS) the chain is on the cytoplasmic side. The helical transmembrane segment at 98-118 (LLVNNIFVVSAAILFGFSRKA) threads the bilayer. Topologically, residues 119-128 (GSFEMIMLGR) are extracellular. The chain crosses the membrane as a helical span at residues 129–149 (LLVGVNAGVSMNIQPMYLGES). Topologically, residues 150 to 157 (APKELRGA) are cytoplasmic. Residues 158–178 (VAMSSAIFTALGIVMGQVVGL) form a helical membrane-spanning segment. Residues 179-187 (RELLGGPQA) are Extracellular-facing. Residues 188-208 (WPLLLASCLVPGALQLASLPL) form a helical membrane-spanning segment. At 209 to 273 (LPESPRYLLI…LFQHRALRRQ (65 aa)) the chain is on the cytoplasmic side. Residues 274–294 (VTSLVVLGSAMELCGNDSVYA) form a helical membrane-spanning segment. At 295–311 (YASSVFRKAGVPEAKIQ) the chain is on the extracellular side. The helical transmembrane segment at 312 to 332 (YAIIGTGSCELLTAVVSCVVI) threads the bilayer. Residues 333-338 (ERVGRR) are Cytoplasmic-facing. Residues 339-359 (VLLIGGYSLMTCWGSIFTVAL) form a helical membrane-spanning segment. At 360 to 364 (CLQSS) the chain is on the extracellular side. Residues 365 to 385 (FPWTLYLAMACIFAFILSFGI) form a helical membrane-spanning segment. At 386–408 (GPAGVTGILATELFDQMARPAAC) the chain is on the cytoplasmic side. Residues 409–429 (MVCGALMWIMLILVGLGFPFI) traverse the membrane as a helical segment. Residues 430-435 (MEALSH) lie on the Extracellular side of the membrane. The helical transmembrane segment at 436 to 456 (FLYVPFLGVCVCGAIYTGLFL) threads the bilayer. At 457–496 (PETKGKTFQEISKELHRLNFPRRAQGPTWRSLEVIQSTEL) the chain is on the cytoplasmic side.

The protein belongs to the major facilitator superfamily. Sugar transporter (TC 2.A.1.1) family. Glucose transporter subfamily. Expressed in heart and skeletal muscle.

Its subcellular location is the cell membrane. It catalyses the reaction D-glucose(out) = D-glucose(in). In terms of biological role, facilitative glucose transporter. The protein is Solute carrier family 2, facilitated glucose transporter member 11 of Homo sapiens (Human).